A 365-amino-acid polypeptide reads, in one-letter code: tRNA-specific 2-thiouridylase MnmA (365 aa).

Residues 6-13 (AMSGGVDS) and L32 contribute to the ATP site. The active-site Nucleophile is C101. C101 and C199 are disulfide-bonded. G125 is an ATP binding site. The tract at residues 149-151 (KDQ) is interaction with tRNA. Catalysis depends on C199, which acts as the Cysteine persulfide intermediate.

The protein belongs to the MnmA/TRMU family.

It localises to the cytoplasm. The catalysed reaction is S-sulfanyl-L-cysteinyl-[protein] + uridine(34) in tRNA + AH2 + ATP = 2-thiouridine(34) in tRNA + L-cysteinyl-[protein] + A + AMP + diphosphate + H(+). Its function is as follows. Catalyzes the 2-thiolation of uridine at the wobble position (U34) of tRNA, leading to the formation of s(2)U34. The protein is tRNA-specific 2-thiouridylase MnmA of Corynebacterium efficiens (strain DSM 44549 / YS-314 / AJ 12310 / JCM 11189 / NBRC 100395).